A 95-amino-acid polypeptide reads, in one-letter code: Protein TusB (95 aa).

The protein belongs to the DsrH/TusB family. In terms of assembly, heterohexamer, formed by a dimer of trimers. The hexameric TusBCD complex contains 2 copies each of TusB, TusC and TusD. The TusBCD complex interacts with TusE.

It localises to the cytoplasm. Part of a sulfur-relay system required for 2-thiolation of 5-methylaminomethyl-2-thiouridine (mnm(5)s(2)U) at tRNA wobble positions. This is Protein TusB from Escherichia coli O81 (strain ED1a).